Here is a 557-residue protein sequence, read N- to C-terminus: ETHYLENE INSENSITIVE 3-like 5 protein (557 aa).

Disordered regions lie at residues 1-23 and 61-96; these read MVEV…DLEE and NLNS…RKKM. Residues 64–82 show a composition bias toward low complexity; it reads SVISSPSSSTSASSSSSSS. Residues 270 to 311 are a coiled coil; it reads ERVRRLARQSKCLQDKMMAKETDTWSRVLNQEEARLNRLKIS.

This sequence belongs to the EIN3 family.

The protein resides in the nucleus. Functionally, putative transcription factor that may be involved in the ethylene response pathway. The sequence is that of ETHYLENE INSENSITIVE 3-like 5 protein (EIL5) from Arabidopsis thaliana (Mouse-ear cress).